The sequence spans 127 residues: Large ribosomal subunit protein bL12 (127 aa).

It belongs to the bacterial ribosomal protein bL12 family. Homodimer. Part of the ribosomal stalk of the 50S ribosomal subunit. Forms a multimeric L10(L12)X complex, where L10 forms an elongated spine to which 2 to 4 L12 dimers bind in a sequential fashion. Binds GTP-bound translation factors.

Forms part of the ribosomal stalk which helps the ribosome interact with GTP-bound translation factors. Is thus essential for accurate translation. The protein is Large ribosomal subunit protein bL12 of Rhizobium etli (strain ATCC 51251 / DSM 11541 / JCM 21823 / NBRC 15573 / CFN 42).